The following is a 284-amino-acid chain: Thymidylate synthase (284 aa).

Residue Arg34 coordinates dUMP. His64 lines the (6R)-5,10-methylene-5,6,7,8-tetrahydrofolate pocket. 139-140 lines the dUMP pocket; that stretch reads RR. Residue Cys159 is the Nucleophile of the active site. DUMP is bound by residues 186-189, Asn197, and 227-229; these read RSAD and HIY. Asp189 is a (6R)-5,10-methylene-5,6,7,8-tetrahydrofolate binding site. Ala283 is a (6R)-5,10-methylene-5,6,7,8-tetrahydrofolate binding site.

This sequence belongs to the thymidylate synthase family. Bacterial-type ThyA subfamily. As to quaternary structure, homodimer.

The protein localises to the cytoplasm. The enzyme catalyses dUMP + (6R)-5,10-methylene-5,6,7,8-tetrahydrofolate = 7,8-dihydrofolate + dTMP. The protein operates within pyrimidine metabolism; dTTP biosynthesis. Catalyzes the reductive methylation of 2'-deoxyuridine-5'-monophosphate (dUMP) to 2'-deoxythymidine-5'-monophosphate (dTMP) while utilizing 5,10-methylenetetrahydrofolate (mTHF) as the methyl donor and reductant in the reaction, yielding dihydrofolate (DHF) as a by-product. This enzymatic reaction provides an intracellular de novo source of dTMP, an essential precursor for DNA biosynthesis. In Polaromonas sp. (strain JS666 / ATCC BAA-500), this protein is Thymidylate synthase.